A 628-amino-acid chain; its full sequence is NUAK family SNF1-like kinase 2 (628 aa).

M1 is subject to N-acetylmethionine. The Protein kinase domain maps to 53-303 (YEFLETLGKG…LEDVASHWWV (251 aa)). Residues 59–67 (LGKGTYGKV) and K81 each bind ATP. Residue D175 is the Proton acceptor of the active site. T208 is subject to Phosphothreonine. Disordered stretches follow at residues 355–492 (KQHA…PQAS) and 522–570 (GSLD…PLRG). A compositionally biased stretch (pro residues) spans 428 to 444 (ELSPIPVSPGQAAPPLP). S435 bears the Phosphoserine mark. Over residues 457 to 469 (SGYYSSPEPSESG) the composition is skewed to low complexity. 4 positions are modified to phosphoserine: S523, S544, S547, and S573.

Belongs to the protein kinase superfamily. CAMK Ser/Thr protein kinase family. SNF1 subfamily. The cofactor is Mg(2+). Phosphorylated at Thr-208 by STK11/LKB1 in complex with STE20-related adapter-alpha (STRADA) pseudo kinase and CAB39. Autophosphorylation is also possible at Thr-208.

It carries out the reaction L-seryl-[protein] + ATP = O-phospho-L-seryl-[protein] + ADP + H(+). It catalyses the reaction L-threonyl-[protein] + ATP = O-phospho-L-threonyl-[protein] + ADP + H(+). With respect to regulation, activated by phosphorylation on Thr-208. Its function is as follows. Stress-activated kinase involved in tolerance to glucose starvation. Induces cell-cell detachment by increasing F-actin conversion to G-actin. Expression is induced by CD95 or TNF-alpha, via NF-kappa-B. Protects cells from CD95-mediated apoptosis and is required for the increased motility and invasiveness of CD95-activated tumor cells. Phosphorylates LATS1 and LATS2. Plays a key role in neural tube closure during embryonic development through LATS2 phosphorylation and regulation of the nuclear localization of YAP1 a critical downstream regulatory target in the Hippo signaling pathway. The protein is NUAK family SNF1-like kinase 2 of Pongo abelii (Sumatran orangutan).